Consider the following 380-residue polypeptide: O-antigen polymerase (380 aa).

Transmembrane regions (helical) follow at residues 1 to 21, 27 to 47, 55 to 75, 94 to 114, 132 to 152, 169 to 189, 201 to 221, 229 to 249, 282 to 302, 306 to 326, 332 to 352, and 353 to 373; these read MTYFTGFILILFAIIIKRLTP, NIVLIANAFWGILLVGYTFNE, ATTLFFILAFLFFFSMTYILI, YIYWFAGMINIISICFGIILL, SISGFGLGISLPLSFCCMYLA, FLLAVLSTSKIFLILFLVYIV, LIYGVFVFGLFALSSIILGKF, IISAIFDTLRVYLFSGLAAFN, ILPWINIGVWDTNVYTAFAPW, LGLYAAIIIGILLGFYYGIWF, LAVGFYQTFLCFPLLMLFFQE, and HYLLSWKMHFIYFLCAILLAM.

The protein resides in the cell inner membrane. The catalysed reaction is n lipid-linked O-antigen repeat units = a lipid-linked O antigen + (n-1) polyisoprenyl diphosphate.. It functions in the pathway bacterial outer membrane biogenesis; LPS O-antigen biosynthesis. Functionally, polymerase involved in the biosynthesis of the lipopolysaccharide (LPS). Catalyzes the polymerization of the O-antigen repeat units on the periplasmic face of the inner membrane, leading to the formation of the lipid-linked O-antigen molecule. The sequence is that of O-antigen polymerase from Shigella dysenteriae.